Reading from the N-terminus, the 615-residue chain is Granule-bound starch synthase 1, chloroplastic/amyloplastic (615 aa).

Residues 1–70 (MAALVTSQLA…DRRCLSMVVR (70 aa)) constitute a chloroplast transit peptide. Lys-91 contributes to the ADP-alpha-D-glucose binding site.

Belongs to the glycosyltransferase 1 family. Bacterial/plant glycogen synthase subfamily. As to expression, found in seeds and pollen.

It is found in the plastid. Its subcellular location is the chloroplast. The protein localises to the amyloplast. The enzyme catalyses an NDP-alpha-D-glucose + [(1-&gt;4)-alpha-D-glucosyl](n) = [(1-&gt;4)-alpha-D-glucosyl](n+1) + a ribonucleoside 5'-diphosphate + H(+). Its pathway is glycan biosynthesis; starch biosynthesis. In Triticum aestivum (Wheat), this protein is Granule-bound starch synthase 1, chloroplastic/amyloplastic (WAXY).